Reading from the N-terminus, the 33-residue chain is Kunitz-type serine protease inhibitor hainantoxin F7-25.66 (33 aa).

The region spanning 4-33 is the BPTI/Kunitz inhibitor domain; sequence CRLPSDRGRCKASFERWYFNGRTCAKFIYG.

This sequence belongs to the venom Kunitz-type family. 02 (native) subfamily. In terms of tissue distribution, expressed by the venom gland.

It localises to the secreted. In terms of biological role, serine protease inhibitor that inhibits trypsin at a molar ratio of 1:1. This is Kunitz-type serine protease inhibitor hainantoxin F7-25.66 from Cyriopagopus hainanus (Chinese bird spider).